A 600-amino-acid polypeptide reads, in one-letter code: Glutamine--fructose-6-phosphate aminotransferase [isomerizing] (600 aa).

The active-site Nucleophile; for GATase activity is C2. Positions 2-217 constitute a Glutamine amidotransferase type-2 domain; sequence CGIVGYIGNE…DEELVIVRRD (216 aa). SIS domains are found at residues 283-422 and 452-590; these read IRAA…AAGK and IARD…VDKP. Residue K595 is the For Fru-6P isomerization activity of the active site.

Homodimer.

It is found in the cytoplasm. The catalysed reaction is D-fructose 6-phosphate + L-glutamine = D-glucosamine 6-phosphate + L-glutamate. In terms of biological role, catalyzes the first step in hexosamine metabolism, converting fructose-6P into glucosamine-6P using glutamine as a nitrogen source. This chain is Glutamine--fructose-6-phosphate aminotransferase [isomerizing], found in Shouchella clausii (strain KSM-K16) (Alkalihalobacillus clausii).